Reading from the N-terminus, the 590-residue chain is Laccase-19 (590 aa).

An N-terminal signal peptide occupies residues 1–28; it reads MEKLSMVTSLLCAITVAVLAVAVVSGEA. Plastocyanin-like domains follow at residues 36 to 152 and 161 to 315; these read VVHE…PRDG and KDVP…YAGT. 2 N-linked (GlcNAc...) asparagine glycosylation sites follow: Asn-41 and Asn-47. Cu cation-binding residues include His-86 and His-88. N-linked (GlcNAc...) asparagine glycosylation occurs at Asn-120. Cu cation is bound by residues His-131 and His-133. N-linked (GlcNAc...) asparagine glycosylation is found at Asn-205, Asn-344, Asn-378, Asn-397, Asn-434, and Asn-465. One can recognise a Plastocyanin-like 3 domain in the interval 424–566; sequence DFPIRPPRPF…ATAFIVEDGP (143 aa). The Cu cation site is built by Asn-483, His-486, His-488, His-545, Cys-546, His-547, His-551, and Met-556. Residues 565–590 form a disordered region; that stretch reads GPTPETSLPPPPPEFKRCGNNGLSQP.

Belongs to the multicopper oxidase family. The cofactor is Cu cation.

The protein localises to the secreted. Its subcellular location is the extracellular space. The protein resides in the apoplast. The enzyme catalyses 4 hydroquinone + O2 = 4 benzosemiquinone + 2 H2O. Lignin degradation and detoxification of lignin-derived products. The protein is Laccase-19 (LAC19) of Oryza sativa subsp. japonica (Rice).